A 537-amino-acid polypeptide reads, in one-letter code: Cytochrome P450 734A5 (537 aa).

The chain crosses the membrane as a helical span at residues 13–33; that stretch reads GAAAVAVAAAAAWVAVYAAAA. Cys480 contacts heme.

Belongs to the cytochrome P450 family. The cofactor is heme. Exclusively expressed in roots.

It localises to the membrane. In terms of biological role, cytochrome P450 probably involved in brassinosteroids (BRs) inactivation and regulation of BRs homeostasis. This is Cytochrome P450 734A5 (CYP734A5) from Oryza sativa subsp. japonica (Rice).